Here is a 534-residue protein sequence, read N- to C-terminus: Replication factor C large subunit (534 aa).

ATP is bound at residue 45 to 52 (GPPGIGKT). A compositionally biased stretch (basic and acidic residues) spans 444 to 463 (KNKKEIKVKTKKDTVEDSSK). A disordered region spans residues 444 to 534 (KNKKEIKVKT…KSRQTTLFDF (91 aa)). Over residues 488–510 (SSNSTTKNKTESPKNSSKTSSKT) the composition is skewed to low complexity. Positions 517 to 527 (TSKKNNKKKSR) are enriched in basic residues.

It belongs to the activator 1 small subunits family. RfcL subfamily. Heteromultimer composed of small subunits (RfcS) and large subunits (RfcL).

Part of the RFC clamp loader complex which loads the PCNA sliding clamp onto DNA. The protein is Replication factor C large subunit of Methanosphaera stadtmanae (strain ATCC 43021 / DSM 3091 / JCM 11832 / MCB-3).